The chain runs to 290 residues: Fructose-1,6-bisphosphatase class 1 (290 aa).

Residues E78, D96, L98, and D99 each coordinate Mg(2+). Substrate is bound by residues 99-102 (DGSS), Y201, and K226. Mg(2+) is bound at residue E232.

The protein belongs to the FBPase class 1 family. Homotetramer. Requires Mg(2+) as cofactor.

It is found in the cytoplasm. The enzyme catalyses beta-D-fructose 1,6-bisphosphate + H2O = beta-D-fructose 6-phosphate + phosphate. It functions in the pathway carbohydrate biosynthesis; gluconeogenesis. In Helicobacter pylori (strain Shi470), this protein is Fructose-1,6-bisphosphatase class 1.